Reading from the N-terminus, the 498-residue chain is Aspartyl/glutamyl-tRNA(Asn/Gln) amidotransferase subunit B (498 aa).

It belongs to the GatB/GatE family. GatB subfamily. In terms of assembly, heterotrimer of A, B and C subunits.

It carries out the reaction L-glutamyl-tRNA(Gln) + L-glutamine + ATP + H2O = L-glutaminyl-tRNA(Gln) + L-glutamate + ADP + phosphate + H(+). The enzyme catalyses L-aspartyl-tRNA(Asn) + L-glutamine + ATP + H2O = L-asparaginyl-tRNA(Asn) + L-glutamate + ADP + phosphate + 2 H(+). Allows the formation of correctly charged Asn-tRNA(Asn) or Gln-tRNA(Gln) through the transamidation of misacylated Asp-tRNA(Asn) or Glu-tRNA(Gln) in organisms which lack either or both of asparaginyl-tRNA or glutaminyl-tRNA synthetases. The reaction takes place in the presence of glutamine and ATP through an activated phospho-Asp-tRNA(Asn) or phospho-Glu-tRNA(Gln). The protein is Aspartyl/glutamyl-tRNA(Asn/Gln) amidotransferase subunit B of Caulobacter vibrioides (strain ATCC 19089 / CIP 103742 / CB 15) (Caulobacter crescentus).